The following is a 149-amino-acid chain: Probable flagellum biosynthesis repressor protein FlbT (149 aa).

This sequence belongs to the FlbT family.

Has a post-transcriptional repressor function in flagellum biogenesis. Associates with the 5'-UTR of fljK mRNA and promotes its degradation. This is Probable flagellum biosynthesis repressor protein FlbT from Rhizobium leguminosarum bv. trifolii (strain WSM2304).